The following is a 419-amino-acid chain: Delta(8)-fatty-acid desaturase (419 aa).

Residues 1–64 enclose the Cytochrome b5 heme-binding domain; the sequence is MKSKRQALSP…LKRMPKINPS (64 aa). Positions 24 and 47 each coordinate heme. A helical membrane pass occupies residues 110-130; the sequence is LGVLGYFLMVQYQMYFIGAVL. The short motif at 143-147 is the Histidine box-1 element; that stretch reads HDICH. A helical transmembrane segment spans residues 156 to 176; sequence WNNLVGLVFGNGLQGFSVTCW. The Histidine box-2 motif lies at 180-184; it reads HNAHH. 3 helical membrane-spanning segments follow: residues 226-246, 266-286, and 290-310; these read YFLVICILLRFIWCFQCVLTV, IGLALHWTLKALFHLFFMPSI, and LLVFFVSELVGGFGIAIVVFM. A Histidine box-3 motif is present at residues 355 to 359; sequence QIEHH.

The protein belongs to the fatty acid desaturase type 1 family. It depends on Fe cation as a cofactor.

The protein resides in the membrane. It carries out the reaction an (11Z,14Z)-icosadienoyl-containing glycerolipid + 2 Fe(II)-[cytochrome b5] + O2 + 2 H(+) = an (8Z,11Z,14Z)-icosatrienoyl-containing glycerolipid + 2 Fe(III)-[cytochrome b5] + 2 H2O. The catalysed reaction is an (11Z,14Z,17Z)-icosatrienoyl-containing glycerolipid + 2 Fe(II)-[cytochrome b5] + O2 + 2 H(+) = an (8Z,11Z,14Z,17Z)-eicosatetraenoyl-containing glycerolipid + 2 Fe(III)-[cytochrome b5] + 2 H2O. It catalyses the reaction an (11Z)-eicosenoyl-containing glycerolipid + 2 Fe(II)-[cytochrome b5] + O2 + 2 H(+) = a (8Z,11Z)-eicosadienoyl-containing glycerolipid + 2 Fe(III)-[cytochrome b5] + 2 H2O. Its pathway is lipid metabolism; fatty acid metabolism. In terms of biological role, delta(8)-fatty-acid desaturase which introduces a double bond at the 8-position in 20-carbon chain length fatty acids (C20) that have an existing delta-11 unsaturation (double bond). Whether it acts on CoA-linked substrates (as in animals) or phospholipid-linked substrates (as in plants and fungi) is still not clear. This is Delta(8)-fatty-acid desaturase (efd1) from Euglena gracilis.